Here is a 399-residue protein sequence, read N- to C-terminus: Protein phosphatase 2C 37 (399 aa).

In terms of domain architecture, PPM-type phosphatase spans 104–389 (KIGTTSVCGR…DNVSVVVVDL (286 aa)). D142 and G143 together coordinate Mn(2+). Positions 146, 148, 208, and 210 each coordinate Zn(2+). Positions 327, 331, and 380 each coordinate Mn(2+).

Belongs to the PP2C family. In terms of assembly, interacts with AKT2/AKT3. Interacts with ABA-bounded PYR1, PYL1, PYL2, PYL3, PYL4, PYL9 and PYL12, and with free PYL2, PYL3, PYL4 and PYL13. Binds to and inactivates SLAC1 and SRK2E. The inactivation of SRK2E does not require phosphatase activity. Interacts with CBL1, CBL2, CBL3, CBL5, and CBL7, but not CBL4, CBL6, and CBL9. Interacts with RGLG1 and RGLG5. Interacts with KIN10. It depends on Mg(2+) as a cofactor. Mn(2+) serves as cofactor. In terms of processing, ubiquitinated by RGLG1 and RGLG5 in response to abscisic acid (ABA). Ubiquitination of PP2CA leads to its degradation by the proteasome. Mostly expressed in seeds and leaves, and, to a lower extent, in roots, stems, and flowers, particularly in siliques. Essentially found in the phloem.

The catalysed reaction is O-phospho-L-seryl-[protein] + H2O = L-seryl-[protein] + phosphate. It catalyses the reaction O-phospho-L-threonyl-[protein] + H2O = L-threonyl-[protein] + phosphate. With respect to regulation, repressed by PYR/PYL/RCAR ABA receptors in an ABA-dependent manner. Functionally, major negative regulator of abscisic acid (ABA) responses during seed germination and cold acclimation. Confers insensitivity to ABA. Modulates negatively the AKT2/3 activity, which mediates K(+) transport and membrane polarization during stress situations, probably by dephosphorylation. Prevents stomata closure by inactivating the S-type anion efflux channel SLAC1 and its activator SRK2E. Represses KIN10 activity by the specific dephosphorylation of its T-loop Thr-198, leading to a poststress inactivation of SnRK1 signaling. The sequence is that of Protein phosphatase 2C 37 (PP2CA) from Arabidopsis thaliana (Mouse-ear cress).